The primary structure comprises 240 residues: uncharacterized protein (240 aa).

To H.influenzae HI_0575.

This is an uncharacterized protein from Escherichia coli (strain K12).